We begin with the raw amino-acid sequence, 257 residues long: Non-homologous end joining protein Ku (257 aa).

Positions 9 to 184 (TFGMVAIPIG…YTKPEVNEQE (176 aa)) constitute a Ku domain.

This sequence belongs to the prokaryotic Ku family. As to quaternary structure, homodimer. Interacts with LigD.

With LigD forms a non-homologous end joining (NHEJ) DNA repair enzyme, which repairs dsDNA breaks with reduced fidelity. Binds linear dsDNA with 5'- and 3'- overhangs but not closed circular dsDNA nor ssDNA. Recruits and stimulates the ligase activity of LigD. This chain is Non-homologous end joining protein Ku, found in Lachnoclostridium phytofermentans (strain ATCC 700394 / DSM 18823 / ISDg) (Clostridium phytofermentans).